Here is a 196-residue protein sequence, read N- to C-terminus: Probable malonic semialdehyde reductase RutE (196 aa).

It belongs to the nitroreductase family. HadB/RutE subfamily. FMN serves as cofactor.

It carries out the reaction 3-hydroxypropanoate + NADP(+) = 3-oxopropanoate + NADPH + H(+). Functionally, may reduce toxic product malonic semialdehyde to 3-hydroxypropionic acid, which is excreted. The sequence is that of Probable malonic semialdehyde reductase RutE from Shigella dysenteriae serotype 1 (strain Sd197).